The following is a 321-amino-acid chain: AA9 family lytic polysaccharide monooxygenase A (321 aa).

Residues M1–G21 form the signal peptide. Cu(2+) is bound at residue H20. A disulfide bridge links C71 with C197. N72 carries an N-linked (GlcNAc...) asparagine glycan. H105 contributes to the Cu(2+) binding site. N-linked (GlcNAc...) asparagine glycosylation occurs at N157. The O2 site is built by H183 and Q192. Y194 contacts Cu(2+). The segment at S278–A306 is disordered. S293 carries GPI-anchor amidated serine lipidation. The propeptide at S294 to A321 is removed in mature form.

It belongs to the polysaccharide monooxygenase AA9 family. It depends on Cu(2+) as a cofactor.

It localises to the cell membrane. The catalysed reaction is [(1-&gt;4)-beta-D-glucosyl]n+m + reduced acceptor + O2 = 4-dehydro-beta-D-glucosyl-[(1-&gt;4)-beta-D-glucosyl]n-1 + [(1-&gt;4)-beta-D-glucosyl]m + acceptor + H2O.. Functionally, lytic polysaccharide monooxygenase (LPMO) that depolymerizes crystalline and amorphous polysaccharides via the oxidation of scissile alpha- or beta-(1-4)-glycosidic bonds, yielding C1 or C4 oxidation products. Catalysis by LPMOs requires the reduction of the active-site copper from Cu(II) to Cu(I) by a reducing agent and H(2)O(2) or O(2) as a cosubstrate. Has broad specificity, cleaving at any position along the beta-glucan backbone of xyloglucan, regardless of substitutions. Shows minor activity on glucomannan. In Gloeophyllum trabeum (strain ATCC 11539 / FP-39264 / Madison 617) (Brown rot fungus), this protein is AA9 family lytic polysaccharide monooxygenase A.